We begin with the raw amino-acid sequence, 417 residues long: Serine protease hepsin (417 aa).

Topologically, residues 1 to 23 (MAQKEGGRTVPCCSRPKVAALTA) are cytoplasmic. The helical; Signal-anchor for type II membrane protein transmembrane segment at 24-44 (GTLLLLTAIGAASWAIVAVLL) threads the bilayer. At 45–417 (RSDQEPLYPV…SEASGMVTQL (373 aa)) the chain is on the extracellular side. In terms of domain architecture, SRCR spans 54–151 (VQVSSADARL…RGRFLATICQ (98 aa)). 8 disulfides stabilise this stretch: Cys-77–Cys-140, Cys-90–Cys-150, Cys-119–Cys-138, Cys-153–Cys-277, Cys-188–Cys-204, Cys-291–Cys-359, Cys-322–Cys-338, and Cys-349–Cys-381. Asn-112 carries an N-linked (GlcNAc...) asparagine glycan. Positions 163–405 (IVGGRDTSLG…FREWIFQAIK (243 aa)) constitute a Peptidase S1 domain. Residues His-203 and Asp-257 each act as charge relay system in the active site. The Charge relay system role is filled by Ser-353.

It belongs to the peptidase S1 family.

It is found in the membrane. It carries out the reaction Cleavage after basic amino-acid residues, with Arg strongly preferred to Lys.. In terms of biological role, plays an essential role in cell growth and maintenance of cell morphology. May mediate the activating cleavage of HGF and MST1/HGFL. Plays a role in the proteolytic processing of ACE2. This chain is Serine protease hepsin (HPN), found in Pongo abelii (Sumatran orangutan).